A 76-amino-acid polypeptide reads, in one-letter code: Acyl carrier protein (76 aa).

The Carrier domain maps to 1-76 (MSVEEKVKKI…DAIDYIAGKQ (76 aa)). Position 36 is an O-(pantetheine 4'-phosphoryl)serine (serine 36).

It belongs to the acyl carrier protein (ACP) family. 4'-phosphopantetheine is transferred from CoA to a specific serine of apo-ACP by AcpS. This modification is essential for activity because fatty acids are bound in thioester linkage to the sulfhydryl of the prosthetic group.

It is found in the cytoplasm. Its pathway is lipid metabolism; fatty acid biosynthesis. Functionally, carrier of the growing fatty acid chain in fatty acid biosynthesis. This Oleidesulfovibrio alaskensis (strain ATCC BAA-1058 / DSM 17464 / G20) (Desulfovibrio alaskensis) protein is Acyl carrier protein.